The following is a 203-amino-acid chain: Ras-related protein Rab-7a (203 aa).

Residues 15–22 (GDSGVGKT), 34–40 (SNQYKAT), 63–67 (DTAGQ), 125–128 (NKID), and 157–158 (AK) contribute to the GTP site. Positions 37 to 45 (YKATIGADF) match the Effector region motif. S-geranylgeranyl cysteine attachment occurs at residues cysteine 202 and cysteine 203.

It belongs to the small GTPase superfamily. Rab family.

The protein localises to the late endosome membrane. The protein resides in the lysosome membrane. It localises to the cytoplasmic vesicle. Its subcellular location is the autophagosome membrane. It is found in the lipid droplet. The catalysed reaction is GTP + H2O = GDP + phosphate + H(+). Functionally, small GTPase which cycles between active GTP-bound and inactive GDP-bound states. In its active state, binds to a variety of effector proteins playing a key role in the regulation of endo-lysosomal trafficking. Governs early-to-late endosomal maturation, microtubule minus-end as well as plus-end directed endosomal migration and positioning, and endosome-lysosome transport through different protein-protein interaction cascades. Involved in lipophagy, a cytosolic lipase-independent autophagic pathway. The sequence is that of Ras-related protein Rab-7a (rab7A) from Dictyostelium discoideum (Social amoeba).